A 503-amino-acid chain; its full sequence is Probable cytosol aminopeptidase (503 aa).

The Mn(2+) site is built by lysine 270 and aspartate 275. Lysine 282 is an active-site residue. Mn(2+) is bound by residues aspartate 293, aspartate 352, and glutamate 354. Residue arginine 356 is part of the active site.

The protein belongs to the peptidase M17 family. Mn(2+) serves as cofactor.

It localises to the cytoplasm. It catalyses the reaction Release of an N-terminal amino acid, Xaa-|-Yaa-, in which Xaa is preferably Leu, but may be other amino acids including Pro although not Arg or Lys, and Yaa may be Pro. Amino acid amides and methyl esters are also readily hydrolyzed, but rates on arylamides are exceedingly low.. It carries out the reaction Release of an N-terminal amino acid, preferentially leucine, but not glutamic or aspartic acids.. Functionally, presumably involved in the processing and regular turnover of intracellular proteins. Catalyzes the removal of unsubstituted N-terminal amino acids from various peptides. The chain is Probable cytosol aminopeptidase from Shigella flexneri.